A 113-amino-acid polypeptide reads, in one-letter code: U11-theraphotoxin-Hhn1r (113 aa).

Residues 1–21 (MNTVRVTFLLVFVLAVSLGQA) form the signal peptide. A propeptide spanning residues 22 to 74 (DKDENRMEMQEKTEQGKSYLDFAENLLLQKLEELEAKLLEEDSEESRNSRQKR) is cleaved from the precursor. Residues 61-83 (EEDSEESRNSRQKRCIGEGVPCD) form a disordered region. 3 disulfides stabilise this stretch: Cys-75–Cys-90, Cys-82–Cys-95, and Cys-89–Cys-110.

It belongs to the neurotoxin 14 (magi-1) family. 01 (HNTX-16) subfamily. As to expression, expressed by the venom gland.

Its subcellular location is the secreted. In terms of biological role, probable ion channel inhibitor. The protein is U11-theraphotoxin-Hhn1r of Cyriopagopus hainanus (Chinese bird spider).